Consider the following 237-residue polypeptide: High-affinity branched-chain amino acid transport ATP-binding protein LivF (237 aa).

The region spanning 6 to 237 is the ABC transporter domain; that stretch reads LSFDKVSAHY…EAVRSAYLGG (232 aa). Residue 38-45 coordinates ATP; the sequence is GANGAGKT.

The protein belongs to the ABC transporter superfamily.

Component of the leucine-specific transport system. The polypeptide is High-affinity branched-chain amino acid transport ATP-binding protein LivF (livF) (Escherichia coli (strain K12)).